A 216-amino-acid polypeptide reads, in one-letter code: DNA gyrase subunit B (216 aa).

Positions Ser-140–Ile-216 constitute a Toprim domain.

It belongs to the type II topoisomerase GyrB family. Heterotetramer, composed of two GyrA and two GyrB chains. In the heterotetramer, GyrA contains the active site tyrosine that forms a transient covalent intermediate with DNA, while GyrB binds cofactors and catalyzes ATP hydrolysis.

It localises to the cytoplasm. The catalysed reaction is ATP-dependent breakage, passage and rejoining of double-stranded DNA.. Its function is as follows. A type II topoisomerase that negatively supercoils closed circular double-stranded (ds) DNA in an ATP-dependent manner to modulate DNA topology and maintain chromosomes in an underwound state. Negative supercoiling favors strand separation, and DNA replication, transcription, recombination and repair, all of which involve strand separation. Also able to catalyze the interconversion of other topological isomers of dsDNA rings, including catenanes and knotted rings. Type II topoisomerases break and join 2 DNA strands simultaneously in an ATP-dependent manner. The sequence is that of DNA gyrase subunit B (gyrB) from Acinetobacter venetianus (strain ATCC 31012 / DSM 23050 / BCRC 14357 / CCUG 45561 / CIP 110063 / KCTC 2702 / LMG 19082 / RAG-1).